A 381-amino-acid chain; its full sequence is Glycerate 2-kinase (381 aa).

The protein belongs to the glycerate kinase type-1 family.

It catalyses the reaction (R)-glycerate + ATP = (2R)-2-phosphoglycerate + ADP + H(+). Functionally, catalyzes the transfer of the phosphate group from adenosine triphosphate (ATP) to (R)-glycerate to form (2R)-2-phosphoglycerate, an enzymatic step in (L)-glucarate/galactarate catabolic pathway. This Escherichia coli (strain K12) protein is Glycerate 2-kinase (garK).